Reading from the N-terminus, the 405-residue chain is Accessory Sec system protein translocase subunit SecY2 (405 aa).

10 helical membrane-spanning segments follow: residues 14 to 34 (LFTLFLLFIYVLGSRIILPFV), 63 to 83 (LSIFSVGLSPWMSAMILWQMF), 104 to 124 (MYLTLMIAVIQSLAVSLRLPV), 131 to 151 (ILVVLMNTILLIAGTFFLVWL), 156 to 176 (ASMGIGGSIVILLSSMVLNIP), 191 to 211 (GIIVLLALLTLVFSYLLALMY), 247 to 267 (MYVMSFLSVPAYLFILLGFIF), 285 to 305 (PLWVYVYISVLFLFSIIFAFV), 343 to 363 (FSVIGGLFNVVMAGGPMLFVL), and 368 to 388 (LLRLAMIPGLFMMFGGMIFTI).

It belongs to the SecY/SEC61-alpha family. SecY2 subfamily. Component of the accessory SecA2/SecY2 protein translocase complex required to export cell wall proteins. May form heterotrimers with SecE and SecG subunits.

The protein localises to the cell membrane. Part of the accessory SecA2/SecY2 system specifically required for export of possible cell wall proteins. The central subunit of a protein translocation channel. The chain is Accessory Sec system protein translocase subunit SecY2 from Streptococcus pneumoniae (strain CGSP14).